Reading from the N-terminus, the 281-residue chain is Arabinooligosaccharides transport system permease protein AraQ (281 aa).

Transmembrane regions (helical) follow at residues 15-35 (LTLFFMMLSLLYLFPIFCLLL), 81-101 (LVLGLFTTVLTLFFSSMIGYG), 112-132 (IIFVLVLIIMMVPLEVMMLPL), 142-162 (IDSYTGVILPFIVSPVAVFFF), 185-205 (FGIFFRIMAPLMKPAFGAMII), and 247-267 (MLISGSVFAILPVIIIFLFFQ). An ABC transmembrane type-1 domain is found at 77–266 (FFNSLVLGLF…LPVIIIFLFF (190 aa)).

This sequence belongs to the binding-protein-dependent transport system permease family. MalFG subfamily. As to quaternary structure, the complex is composed of two ATP-binding proteins (MsmX), two transmembrane proteins (AraP and AraQ) and a solute-binding protein (AraN).

Its subcellular location is the cell membrane. In terms of biological role, part of the ABC transporter complex AraNPQ involved in the uptake of arabinooligosaccharides. Transports alpha-1,5-arabinooligosaccharides, at least up to four L-arabinosyl units. Responsible for the translocation of the substrate across the membrane. The sequence is that of Arabinooligosaccharides transport system permease protein AraQ from Bacillus subtilis (strain 168).